We begin with the raw amino-acid sequence, 426 residues long: Enolase (426 aa).

Gln-163 contacts (2R)-2-phosphoglycerate. The Proton donor role is filled by Glu-205. Mg(2+)-binding residues include Asp-242, Glu-285, and Asp-312. (2R)-2-phosphoglycerate is bound by residues Lys-337, Arg-366, Ser-367, and Lys-388. Lys-337 functions as the Proton acceptor in the catalytic mechanism.

It belongs to the enolase family. Mg(2+) serves as cofactor.

It is found in the cytoplasm. Its subcellular location is the secreted. It localises to the cell surface. The catalysed reaction is (2R)-2-phosphoglycerate = phosphoenolpyruvate + H2O. It participates in carbohydrate degradation; glycolysis; pyruvate from D-glyceraldehyde 3-phosphate: step 4/5. Functionally, catalyzes the reversible conversion of 2-phosphoglycerate (2-PG) into phosphoenolpyruvate (PEP). It is essential for the degradation of carbohydrates via glycolysis. This chain is Enolase, found in Caulobacter vibrioides (strain ATCC 19089 / CIP 103742 / CB 15) (Caulobacter crescentus).